Here is a 356-residue protein sequence, read N- to C-terminus: Molybdenum import ATP-binding protein ModC (356 aa).

The ABC transporter domain occupies methionine 1 to aspartate 232. Position 33-40 (glycine 33–threonine 40) interacts with ATP. The 66-residue stretch at glutamate 291–glutamate 356 folds into the Mop domain.

It belongs to the ABC transporter superfamily. Molybdate importer (TC 3.A.1.8) family. The complex is composed of two ATP-binding proteins (ModC), two transmembrane proteins (ModB) and a solute-binding protein (ModA).

The protein localises to the cell inner membrane. The catalysed reaction is molybdate(out) + ATP + H2O = molybdate(in) + ADP + phosphate + H(+). Its function is as follows. Part of the ABC transporter complex ModABC involved in molybdenum import. Responsible for energy coupling to the transport system. The sequence is that of Molybdenum import ATP-binding protein ModC from Methylococcus capsulatus (strain ATCC 33009 / NCIMB 11132 / Bath).